The chain runs to 456 residues: UDP-N-acetylglucosamine 1-carboxyvinyltransferase (456 aa).

34-35 (KN) serves as a coordination point for phosphoenolpyruvate. Arg104 lines the UDP-N-acetyl-alpha-D-glucosamine pocket. The Proton donor role is filled by Cys128. Cys128 carries the 2-(S-cysteinyl)pyruvic acid O-phosphothioketal modification. 2 residues coordinate UDP-N-acetyl-alpha-D-glucosamine: Asp319 and Ile341.

Belongs to the EPSP synthase family. MurA subfamily.

It is found in the cytoplasm. The catalysed reaction is phosphoenolpyruvate + UDP-N-acetyl-alpha-D-glucosamine = UDP-N-acetyl-3-O-(1-carboxyvinyl)-alpha-D-glucosamine + phosphate. Its pathway is cell wall biogenesis; peptidoglycan biosynthesis. Its function is as follows. Cell wall formation. Adds enolpyruvyl to UDP-N-acetylglucosamine. The chain is UDP-N-acetylglucosamine 1-carboxyvinyltransferase from Prochlorococcus marinus (strain MIT 9312).